A 251-amino-acid polypeptide reads, in one-letter code: Cell division protein ZapD (251 aa).

This sequence belongs to the ZapD family. Interacts with FtsZ.

It localises to the cytoplasm. Cell division factor that enhances FtsZ-ring assembly. Directly interacts with FtsZ and promotes bundling of FtsZ protofilaments, with a reduction in FtsZ GTPase activity. This chain is Cell division protein ZapD, found in Azoarcus sp. (strain BH72).